Here is a 610-residue protein sequence, read N- to C-terminus: UvrABC system protein C (610 aa).

Residues 16-94 (SQPGVYRMYD…IKLYQPRYNV (79 aa)) form the GIY-YIG domain. Positions 204 to 239 (DQVLTQLIARMEKASQDLAFEEAARIRDQIQAVRRV) constitute a UVR domain.

Belongs to the UvrC family. In terms of assembly, interacts with UvrB in an incision complex.

Its subcellular location is the cytoplasm. The UvrABC repair system catalyzes the recognition and processing of DNA lesions. UvrC both incises the 5' and 3' sides of the lesion. The N-terminal half is responsible for the 3' incision and the C-terminal half is responsible for the 5' incision. The sequence is that of UvrABC system protein C from Salmonella agona (strain SL483).